A 255-amino-acid polypeptide reads, in one-letter code: tRNA (guanine-N(1)-)-methyltransferase (255 aa).

Residues G117 and 137 to 142 (IGDYVL) each bind S-adenosyl-L-methionine.

The protein belongs to the RNA methyltransferase TrmD family. Homodimer.

The protein localises to the cytoplasm. It carries out the reaction guanosine(37) in tRNA + S-adenosyl-L-methionine = N(1)-methylguanosine(37) in tRNA + S-adenosyl-L-homocysteine + H(+). Functionally, specifically methylates guanosine-37 in various tRNAs. This chain is tRNA (guanine-N(1)-)-methyltransferase, found in Glaesserella parasuis serovar 5 (strain SH0165) (Haemophilus parasuis).